The chain runs to 91 residues: Large ribosomal subunit protein bL31B (91 aa).

This sequence belongs to the bacterial ribosomal protein bL31 family. Type B subfamily. In terms of assembly, part of the 50S ribosomal subunit.

The polypeptide is Large ribosomal subunit protein bL31B (Neisseria meningitidis serogroup C (strain 053442)).